A 457-amino-acid chain; its full sequence is uncharacterized protein (457 aa).

This is an uncharacterized protein from Acanthamoeba polyphaga mimivirus (APMV).